The following is a 2179-amino-acid chain: Probable inactive serine/threonine-protein kinase lvsG (2179 aa).

The tract at residues Asp-100–Ser-167 is disordered. Composition is skewed to low complexity over residues Asn-106 to Gly-121 and Leu-141 to Ser-159. A WD 1 repeat occupies Leu-216 to Pro-256. 9 disordered regions span residues Leu-281–Ser-300, Asp-523–Trp-556, Asp-589–Lys-621, Lys-778–Phe-801, Asn-844–Ser-959, Ala-1033–Leu-1055, Gly-1079–Asp-1153, Asn-1339–Ser-1362, and Thr-1785–Leu-1807. The region spanning Tyr-463–Phe-801 is the BEACH domain. Low complexity predominate over residues Asn-534–Asp-548. The segment covering Ser-590–Gly-602 has biased composition (gly residues). Low complexity-rich tracts occupy residues Gln-783–Gln-800, Asn-853–Asn-943, Ala-1033–Ala-1047, and Thr-1084–Asn-1098. Residues Leu-1021 to Ser-1049 adopt a coiled-coil conformation. The Protein kinase domain occupies Glu-1064–Phe-1400. Residues Met-1099–Ile-1122 are compositionally biased toward polar residues. The segment covering Gln-1123–Gln-1134 has biased composition (low complexity). Polar residues predominate over residues Asn-1135–Asp-1153. Low complexity-rich tracts occupy residues Asn-1339–Asn-1360 and Thr-1785–Asn-1801. WD repeat units follow at residues Glu-1864–Thr-1903, Gln-1906–Val-1942, Glu-1945–Glu-1983, Ser-2007–Gln-2048, His-2052–Ser-2089, and Pro-2149–Gln-2179.

It belongs to the protein kinase superfamily. Ser/Thr protein kinase family.

This chain is Probable inactive serine/threonine-protein kinase lvsG (lvsG), found in Dictyostelium discoideum (Social amoeba).